The primary structure comprises 464 residues: Cysteine--tRNA ligase (464 aa).

Zn(2+) is bound at residue C27. Positions 29–39 (PTVYDDAHLGH) match the 'HIGH' region motif. 3 residues coordinate Zn(2+): C203, H234, and E238. The short motif at 266–270 (KMSKS) is the 'KMSKS' region element. K269 provides a ligand contact to ATP.

The protein belongs to the class-I aminoacyl-tRNA synthetase family. As to quaternary structure, monomer. Requires Zn(2+) as cofactor.

It is found in the cytoplasm. The catalysed reaction is tRNA(Cys) + L-cysteine + ATP = L-cysteinyl-tRNA(Cys) + AMP + diphosphate. The protein is Cysteine--tRNA ligase of Campylobacter concisus (strain 13826).